A 375-amino-acid chain; its full sequence is N5-carboxyaminoimidazole ribonucleotide synthase (375 aa).

ATP contacts are provided by residues Arg108, Lys148, 153–159 (GYDGKGQ), 183–186 (EQYL), Glu191, His214, and 266–267 (NE). Positions 112–296 (KQTLLEANTQ…QFDTHILAIT (185 aa)) constitute an ATP-grasp domain.

This sequence belongs to the PurK/PurT family. As to quaternary structure, homodimer.

It catalyses the reaction 5-amino-1-(5-phospho-beta-D-ribosyl)imidazole + hydrogencarbonate + ATP = 5-carboxyamino-1-(5-phospho-D-ribosyl)imidazole + ADP + phosphate + 2 H(+). It participates in purine metabolism; IMP biosynthesis via de novo pathway; 5-amino-1-(5-phospho-D-ribosyl)imidazole-4-carboxylate from 5-amino-1-(5-phospho-D-ribosyl)imidazole (N5-CAIR route): step 1/2. In terms of biological role, catalyzes the ATP-dependent conversion of 5-aminoimidazole ribonucleotide (AIR) and HCO(3)(-) to N5-carboxyaminoimidazole ribonucleotide (N5-CAIR). The chain is N5-carboxyaminoimidazole ribonucleotide synthase from Staphylococcus epidermidis (strain ATCC 35984 / DSM 28319 / BCRC 17069 / CCUG 31568 / BM 3577 / RP62A).